The primary structure comprises 63 residues: Protein DsrB (63 aa).

Belongs to the DsrB family.

The chain is Protein DsrB from Yersinia pseudotuberculosis serotype O:1b (strain IP 31758).